We begin with the raw amino-acid sequence, 555 residues long: MARVEL domain-containing protein 2 (555 aa).

Basic and acidic residues predominate over residues 1–20 (MSSSDARSRIRDRGYSEVPR). A disordered region spans residues 1–71 (MSSSDARSRI…FYSSDTEEPA (71 aa)). Topologically, residues 1–191 (MSSSDARSRI…YMKSWAGLLR (191 aa)) are cytoplasmic. A compositionally biased stretch (pro residues) spans 46–59 (PLPPPPLPLQPPFG). Phosphoserine is present on residues Ser117, Ser121, and Ser158. Residues 118–142 (PPASPARANHHPYKDPSRGSQGTFN) form a disordered region. Thr163 carries the post-translational modification Phosphothreonine. Residues 185–364 (SWAGLLRILG…SALVCLKLWR (180 aa)) enclose the MARVEL domain. Residues 192 to 212 (ILGVVELLLGAGVFACVTAYI) form a helical membrane-spanning segment. The Extracellular segment spans residues 213-251 (HKDNEWYNLFGYTQPYGMGGLGSLGNTYGGYYYSGPKTP). The chain crosses the membrane as a helical span at residues 252 to 272 (FVLVVAGLAWITTIIILVLGM). Residues 273–288 (SMYYRTILLDSNWWPL) are Cytoplasmic-facing. A helical transmembrane segment spans residues 289-309 (TEFGVNVALFILYMAAAIVYV). At 310 to 338 (NDTNRGGLCYYPLFNTPMNAMFCRVEGGQ) the chain is on the extracellular side. The helical transmembrane segment at 339-359 (IAAMIFLFVTMIVYLVSALVC) threads the bilayer. The Cytoplasmic segment spans residues 360-555 (LKLWRHEAAR…VMNWDTQGYP (196 aa)). Ser384 bears the Phosphoserine mark. Lys408 participates in a covalent cross-link: Glycyl lysine isopeptide (Lys-Gly) (interchain with G-Cter in ubiquitin). In terms of domain architecture, OCEL spans 437-548 (PDYVAKYPVI…RIQEYDKVMN (112 aa)). Residues 521–545 (EKKERCDYLKNKLSHIKQRIQEYDK) adopt a coiled-coil conformation.

The protein belongs to the ELL/occludin family. As to quaternary structure, interacts with TJP1. Interacts with the ubiquitin ligase ITCH. Interacts (via C-terminal cytoplasmic domain) with LSR (via the cytoplasmic domain), ILDR1 and ILDR2; the interaction is required to recruit MARVELD2 to tricellular contacts. In terms of processing, ubiquitinated by ITCH; but this ubiquitination does not lead to proteasomal degradation. Polyubiquitinated at Lys-408 via 'Lys-63'-linked ubiquitin chains; deubiquitinated by USP53. Phosphorylated. As to expression, detected in small intestine, stomach and kidney, in epithelial cells. Detected in pancreas, retina and lung, and in stria vascularis, utricle and the organ of Conti in the inner ear (at protein level). Predominantly detected in small intestine, lung and kidney, with lower levels in liver, testis and brain. In colon, expressed in the entire crypts.

Its subcellular location is the cell membrane. The protein resides in the cell junction. The protein localises to the tight junction. Functionally, plays a role in the formation of tricellular tight junctions and of epithelial barriers. Required for normal hearing via its role in the separation of the endolymphatic and perilymphatic spaces of the organ of Corti in the inner ear, and for normal survival of hair cells in the organ of Corti. In Mus musculus (Mouse), this protein is MARVEL domain-containing protein 2.